A 281-amino-acid chain; its full sequence is Large ribosomal subunit protein uL2 (281 aa).

2 disordered regions span residues 1-23 (MAVKHYKPVTNGRRNMSSLDYSK) and 224-281 (RGSV…KDSK). A compositionally biased stretch (polar residues) spans 12-23 (GRRNMSSLDYSK). Residues 261-281 (KTRKTKKSSTKLILRRRKDSK) show a composition bias toward basic residues.

This sequence belongs to the universal ribosomal protein uL2 family. As to quaternary structure, part of the 50S ribosomal subunit. Forms a bridge to the 30S subunit in the 70S ribosome.

Functionally, one of the primary rRNA binding proteins. Required for association of the 30S and 50S subunits to form the 70S ribosome, for tRNA binding and peptide bond formation. It has been suggested to have peptidyltransferase activity; this is somewhat controversial. Makes several contacts with the 16S rRNA in the 70S ribosome. This chain is Large ribosomal subunit protein uL2, found in Mycoplasmopsis agalactiae (strain NCTC 10123 / CIP 59.7 / PG2) (Mycoplasma agalactiae).